Consider the following 278-residue polypeptide: Adenosylcobinamide-GDP ribazoletransferase (278 aa).

7 helical membrane passes run 31–51, 66–86, 115–135, 148–168, 187–207, 215–237, and 247–267; these read AMALAPFVGLALGLLAGSAVF, TLLPAVVGVTVLALVTRGLHL, TIGAFGAIIVLFVVLLQVGAL, ILVAAMTSRLAATLACTGAVP, DAALSFLAVCAVAALAGLLDF, ALRAVLAVWVGTGVSFLLRRYLL, and ILGGLIEITAAATLLVMAMTI.

This sequence belongs to the CobS family. It depends on Mg(2+) as a cofactor.

It localises to the cell membrane. It carries out the reaction alpha-ribazole + adenosylcob(III)inamide-GDP = adenosylcob(III)alamin + GMP + H(+). The catalysed reaction is alpha-ribazole 5'-phosphate + adenosylcob(III)inamide-GDP = adenosylcob(III)alamin 5'-phosphate + GMP + H(+). The protein operates within cofactor biosynthesis; adenosylcobalamin biosynthesis; adenosylcobalamin from cob(II)yrinate a,c-diamide: step 7/7. Joins adenosylcobinamide-GDP and alpha-ribazole to generate adenosylcobalamin (Ado-cobalamin). Also synthesizes adenosylcobalamin 5'-phosphate from adenosylcobinamide-GDP and alpha-ribazole 5'-phosphate. This chain is Adenosylcobinamide-GDP ribazoletransferase, found in Frankia casuarinae (strain DSM 45818 / CECT 9043 / HFP020203 / CcI3).